The following is a 423-amino-acid chain: Protein CLP1 homolog (423 aa).

Residues Glu16, Lys57, and 119-124 (DVGKST) each bind ATP.

The protein belongs to the Clp1 family. Clp1 subfamily.

It is found in the nucleus. Required for endonucleolytic cleavage during polyadenylation-dependent pre-mRNA 3'-end formation. This is Protein CLP1 homolog (cbc) from Drosophila simulans (Fruit fly).